We begin with the raw amino-acid sequence, 108 residues long: Nucleoid-associated protein CPS_3743 (108 aa).

The tract at residues 87 to 108 (NKDKMGALTGGMQLPPGMKMPF) is disordered.

This sequence belongs to the YbaB/EbfC family. In terms of assembly, homodimer.

Its subcellular location is the cytoplasm. It is found in the nucleoid. Binds to DNA and alters its conformation. May be involved in regulation of gene expression, nucleoid organization and DNA protection. The chain is Nucleoid-associated protein CPS_3743 from Colwellia psychrerythraea (strain 34H / ATCC BAA-681) (Vibrio psychroerythus).